We begin with the raw amino-acid sequence, 104 residues long: UPF0235 protein M446_3939 (104 aa).

It belongs to the UPF0235 family.

The chain is UPF0235 protein M446_3939 from Methylobacterium sp. (strain 4-46).